The sequence spans 336 residues: Flap endonuclease 1 (336 aa).

Residues 1–98 form an N-domain region; the sequence is MGVDLGDILS…GTLAARAQMK (98 aa). Positions 27, 80, 150, 152, 171, 173, and 234 each coordinate Mg(2+). An I-domain region spans residues 114-255; that stretch reads DSFRYAQATA…RALKLIREHG (142 aa). Residues 328 to 336 are interaction with PCNA; sequence GQSTLERWL.

The protein belongs to the XPG/RAD2 endonuclease family. FEN1 subfamily. Interacts with PCNA. PCNA stimulates the nuclease activity without altering cleavage specificity. The cofactor is Mg(2+).

In terms of biological role, structure-specific nuclease with 5'-flap endonuclease and 5'-3' exonuclease activities involved in DNA replication and repair. During DNA replication, cleaves the 5'-overhanging flap structure that is generated by displacement synthesis when DNA polymerase encounters the 5'-end of a downstream Okazaki fragment. Binds the unpaired 3'-DNA end and kinks the DNA to facilitate 5' cleavage specificity. Cleaves one nucleotide into the double-stranded DNA from the junction in flap DNA, leaving a nick for ligation. Also involved in the base excision repair (BER) pathway. Acts as a genome stabilization factor that prevents flaps from equilibrating into structures that lead to duplications and deletions. Also possesses 5'-3' exonuclease activity on nicked or gapped double-stranded DNA. The chain is Flap endonuclease 1 from Methanothrix thermoacetophila (strain DSM 6194 / JCM 14653 / NBRC 101360 / PT) (Methanosaeta thermophila).